Reading from the N-terminus, the 202-residue chain is FMN-dependent NADH:quinone oxidoreductase (202 aa).

FMN contacts are provided by residues serine 9, 15-17, 95-98, and 139-142; these read SVS, MYNF, and SRGG.

It belongs to the azoreductase type 1 family. As to quaternary structure, homodimer. FMN serves as cofactor.

It carries out the reaction 2 a quinone + NADH + H(+) = 2 a 1,4-benzosemiquinone + NAD(+). It catalyses the reaction N,N-dimethyl-1,4-phenylenediamine + anthranilate + 2 NAD(+) = 2-(4-dimethylaminophenyl)diazenylbenzoate + 2 NADH + 2 H(+). Quinone reductase that provides resistance to thiol-specific stress caused by electrophilic quinones. Functionally, also exhibits azoreductase activity. Catalyzes the reductive cleavage of the azo bond in aromatic azo compounds to the corresponding amines. In Laribacter hongkongensis (strain HLHK9), this protein is FMN-dependent NADH:quinone oxidoreductase.